Consider the following 213-residue polypeptide: NADH-quinone oxidoreductase subunit B 1 (213 aa).

Residues cysteine 82, cysteine 83, cysteine 148, and cysteine 177 each contribute to the [4Fe-4S] cluster site.

This sequence belongs to the complex I 20 kDa subunit family. NDH-1 is composed of 14 different subunits. Subunits NuoB, C, D, E, F, and G constitute the peripheral sector of the complex. It depends on [4Fe-4S] cluster as a cofactor.

The protein resides in the cell inner membrane. The enzyme catalyses a quinone + NADH + 5 H(+)(in) = a quinol + NAD(+) + 4 H(+)(out). Functionally, NDH-1 shuttles electrons from NADH, via FMN and iron-sulfur (Fe-S) centers, to quinones in the respiratory chain. The immediate electron acceptor for the enzyme in this species is believed to be ubiquinone. Couples the redox reaction to proton translocation (for every two electrons transferred, four hydrogen ions are translocated across the cytoplasmic membrane), and thus conserves the redox energy in a proton gradient. The polypeptide is NADH-quinone oxidoreductase subunit B 1 (Koribacter versatilis (strain Ellin345)).